A 276-amino-acid polypeptide reads, in one-letter code: Protein PXR1 (276 aa).

Residues methionine 1–asparagine 23 form a disordered region. The G-patch domain occupies threonine 25–histidine 71. Basic and acidic residues predominate over residues aspartate 152–lysine 172. The disordered stretch occupies residues aspartate 152 to serine 261. Over residues threonine 173–lysine 218 the composition is skewed to basic residues. Residues aspartate 219–serine 228 are compositionally biased toward basic and acidic residues. Polar residues predominate over residues aspartate 229–alanine 239.

The protein belongs to the PINX1 family.

Its subcellular location is the nucleus. The protein resides in the nucleolus. Functionally, involved in rRNA-processing at A0, A1 and A2 sites and negatively regulates telomerase. The protein is Protein PXR1 (PXR1) of Candida albicans (strain SC5314 / ATCC MYA-2876) (Yeast).